The following is a 140-amino-acid chain: Large ribosomal subunit protein uL11 (140 aa).

This sequence belongs to the universal ribosomal protein uL11 family. Part of the ribosomal stalk of the 50S ribosomal subunit. Interacts with L10 and the large rRNA to form the base of the stalk. L10 forms an elongated spine to which L12 dimers bind in a sequential fashion forming a multimeric L10(L12)X complex. Post-translationally, one or more lysine residues are methylated.

In terms of biological role, forms part of the ribosomal stalk which helps the ribosome interact with GTP-bound translation factors. The chain is Large ribosomal subunit protein uL11 from Pelobacter propionicus (strain DSM 2379 / NBRC 103807 / OttBd1).